The primary structure comprises 589 residues: Arginine--tRNA ligase (589 aa).

Positions 123-133 (ANVAKPMHVGH) match the 'HIGH' region motif.

Belongs to the class-I aminoacyl-tRNA synthetase family. As to quaternary structure, monomer.

The protein resides in the cytoplasm. It catalyses the reaction tRNA(Arg) + L-arginine + ATP = L-arginyl-tRNA(Arg) + AMP + diphosphate. The polypeptide is Arginine--tRNA ligase (Hyphomonas neptunium (strain ATCC 15444)).